Consider the following 313-residue polypeptide: MTQWYPASPALWQGRDDSIEAPDARRLFQTVTRSETFFPENWQQKIALMGFACDEGVKRNSGRPGAAGAPDALRKALANMASHQGHERLVDLGNWVAPTPDLEGAQQALRDAVSRCLRAGMRTLVLGGGHETAFGHGAGVLDAFAQESVGIINLDAHLDLRQTDRATSGTPFRQLAQLCDAQSRAFHYACFGVSRAANTQALWREAQWRNVTVVEDLDCHDALAQMTQFIDKVDKIYLTIDLDVLPVWEMPAVSAPAALGVPLIQVLRLIEPVCRSGKLQAADLVEFNPRFDEDGAAARVAARLGWQIAHWWR.

His-130, Asp-155, His-157, Asp-159, Asp-241, and Asp-243 together coordinate Mn(2+).

The protein belongs to the arginase family. Requires Mn(2+) as cofactor.

The enzyme catalyses N-formimidoyl-L-glutamate + H2O = formamide + L-glutamate. The protein operates within amino-acid degradation; L-histidine degradation into L-glutamate; L-glutamate from N-formimidoyl-L-glutamate (hydrolase route): step 1/1. Its function is as follows. Catalyzes the conversion of N-formimidoyl-L-glutamate to L-glutamate and formamide. In Salmonella choleraesuis (strain SC-B67), this protein is Formimidoylglutamase.